Here is a 528-residue protein sequence, read N- to C-terminus: MGLEVLEALDSARTQWYHVTAIVIAGMGFFTDAYDLFCISTVSKLLGRLYYFDPSTNKPGKLPPSVNNVVTGVALVGTLSGQLVFGWLGDKLGRKKVYGVTLIIMVACAICSGLSFGSSAKSVMITLCFFRFWLGFGIGGDYPLSATIMSEYANKRTRGAFIAAVFAMQGVGIIFAGLVSMVFSGIFKAYYQAPRFNEDPILSTQPEGDLLWRLILMIGAVPAAMTYYWRMKMPETGRYTAIVEGNAKQAAADMARVLDIEIIAEQDKLAEFKAANDYPLWSSEFFNRHGRHLIGTMSCWFLLDIAFYSQNLTQKDIYPAMGLIRQDKEMNAIDEVFQTSRAMFVVALFGTFPGYWFTVFFIEKLGRFKIQLVGFFMMSFFMFVIGVKYEYLKDENKNLFALLYGLTFFFANFGPNSTTFVLPAELFPTRVRSTCHAFSAASGKAGAMVGAFGIQYYTLDGTPRKIRRAMMILAFTNLIGFFCTFLVTETKGRSLEEISGEDGRESELTATPNDRAPGIRQDSRTEKM.

Over 1–18 the chain is Cytoplasmic; sequence MGLEVLEALDSARTQWYH. Residues 19 to 39 form a helical membrane-spanning segment; sequence VTAIVIAGMGFFTDAYDLFCI. Residues 40–68 are Extracellular-facing; that stretch reads STVSKLLGRLYYFDPSTNKPGKLPPSVNN. The helical transmembrane segment at 69–89 threads the bilayer; it reads VVTGVALVGTLSGQLVFGWLG. Over 90–96 the chain is Cytoplasmic; it reads DKLGRKK. The chain crosses the membrane as a helical span at residues 97-117; sequence VYGVTLIIMVACAICSGLSFG. Residues 118 to 122 lie on the Extracellular side of the membrane; sequence SSAKS. A helical membrane pass occupies residues 123 to 143; that stretch reads VMITLCFFRFWLGFGIGGDYP. Over 144–158 the chain is Cytoplasmic; sequence LSATIMSEYANKRTR. Residues 159-179 form a helical membrane-spanning segment; the sequence is GAFIAAVFAMQGVGIIFAGLV. Residues 180–208 lie on the Extracellular side of the membrane; that stretch reads SMVFSGIFKAYYQAPRFNEDPILSTQPEG. A helical transmembrane segment spans residues 209–229; it reads DLLWRLILMIGAVPAAMTYYW. The Cytoplasmic portion of the chain corresponds to 230-292; the sequence is RMKMPETGRY…SEFFNRHGRH (63 aa). The chain crosses the membrane as a helical span at residues 293–313; it reads LIGTMSCWFLLDIAFYSQNLT. Residues 314–341 are Extracellular-facing; sequence QKDIYPAMGLIRQDKEMNAIDEVFQTSR. Residues 342–362 form a helical membrane-spanning segment; it reads AMFVVALFGTFPGYWFTVFFI. Residues 363–371 lie on the Cytoplasmic side of the membrane; that stretch reads EKLGRFKIQ. A helical transmembrane segment spans residues 372-392; that stretch reads LVGFFMMSFFMFVIGVKYEYL. Over 393 to 401 the chain is Extracellular; the sequence is KDENKNLFA. Residues 402-422 form a helical membrane-spanning segment; sequence LLYGLTFFFANFGPNSTTFVL. Residues 423-433 lie on the Cytoplasmic side of the membrane; sequence PAELFPTRVRS. The chain crosses the membrane as a helical span at residues 434 to 454; it reads TCHAFSAASGKAGAMVGAFGI. The Extracellular portion of the chain corresponds to 455–468; the sequence is QYYTLDGTPRKIRR. Residues 469–489 traverse the membrane as a helical segment; that stretch reads AMMILAFTNLIGFFCTFLVTE. Topologically, residues 490-528 are cytoplasmic; that stretch reads TKGRSLEEISGEDGRESELTATPNDRAPGIRQDSRTEKM. Over residues 497–507 the composition is skewed to basic and acidic residues; it reads EISGEDGRESE. Positions 497–528 are disordered; it reads EISGEDGRESELTATPNDRAPGIRQDSRTEKM.

The protein belongs to the major facilitator superfamily. Phosphate:H(+) symporter (TC 2.A.1.9) family. In terms of tissue distribution, mostly expressed in mycorrhizal roots. Also observed in root tips of non-mycorrhizal roots, in a phosphate (Pi) depended-manner, highest expression levels being observed in low Pi conditions.

It is found in the cell membrane. The catalysed reaction is phosphate(in) + H(+)(in) = phosphate(out) + H(+)(out). Its function is as follows. Low-affinity transporter for external inorganic phosphate (Pi) probably involved in the acquisition of phosphate released by arbuscular mycorrhizal (AM) fungi (e.g. Gigaspora gigantea, Glomus versiforme and G.intraradices) during AM symbiosis; required for propper mycorrhizal arbuscule morphology. Acts as a Pi-sensing machinery at the root tip level, independently of AM fungi, involved in the regulation of early root branching and lateral roots formation. The polypeptide is Low affinity inorganic phosphate transporter 4 (Medicago truncatula (Barrel medic)).